Consider the following 406-residue polypeptide: Acetate kinase (406 aa).

Asparagine 8 lines the Mg(2+) pocket. Lysine 15 is a binding site for ATP. Arginine 92 serves as a coordination point for substrate. Catalysis depends on aspartate 149, which acts as the Proton donor/acceptor. ATP-binding positions include 209-213 (HLGNG), 283-285 (DFR), and 331-335 (GVGEN). Residue glutamate 385 coordinates Mg(2+).

This sequence belongs to the acetokinase family. In terms of assembly, homodimer. The cofactor is Mg(2+). Requires Mn(2+) as cofactor.

It is found in the cytoplasm. The enzyme catalyses acetate + ATP = acetyl phosphate + ADP. The protein operates within metabolic intermediate biosynthesis; acetyl-CoA biosynthesis; acetyl-CoA from acetate: step 1/2. Functionally, catalyzes the formation of acetyl phosphate from acetate and ATP. Can also catalyze the reverse reaction. This chain is Acetate kinase, found in Corynebacterium aurimucosum (strain ATCC 700975 / DSM 44827 / CIP 107346 / CN-1) (Corynebacterium nigricans).